A 610-amino-acid chain; its full sequence is Synaptotagmin-like protein 3 (610 aa).

A RabBD domain is found at 4–123 (EIDLSALKEL…IKTGEWFYEE (120 aa)). The segment at 219-239 (RQCVGQTERRSQSDTAVNVTT) is disordered. C2 domains follow at residues 306 to 428 (VTGE…TQSF) and 462 to 603 (RPRK…NLWT).

As to quaternary structure, monomer. Binds NRXN1. Binds RAB27A that has been activated by GTP-binding via its N-terminus.

The protein resides in the endomembrane system. Its function is as follows. May act as Rab effector protein and play a role in vesicle trafficking. Binds phospholipids in the presence of calcium ions. The chain is Synaptotagmin-like protein 3 (SYTL3) from Homo sapiens (Human).